A 193-amino-acid polypeptide reads, in one-letter code: dTTP/UTP pyrophosphatase (193 aa).

Residue Asp-71 is the Proton acceptor of the active site.

Belongs to the Maf family. YhdE subfamily. A divalent metal cation is required as a cofactor.

It localises to the cytoplasm. The catalysed reaction is dTTP + H2O = dTMP + diphosphate + H(+). It catalyses the reaction UTP + H2O = UMP + diphosphate + H(+). Nucleoside triphosphate pyrophosphatase that hydrolyzes dTTP and UTP. May have a dual role in cell division arrest and in preventing the incorporation of modified nucleotides into cellular nucleic acids. This Citrifermentans bemidjiense (strain ATCC BAA-1014 / DSM 16622 / JCM 12645 / Bem) (Geobacter bemidjiensis) protein is dTTP/UTP pyrophosphatase.